Here is a 443-residue protein sequence, read N- to C-terminus: Probable ribonuclease FAU-1 (443 aa).

This sequence belongs to the FAU-1 family.

In terms of biological role, probable RNase involved in rRNA stability through maturation and/or degradation of precursor rRNAs. Binds to RNA in loop regions with AU-rich sequences. The polypeptide is Probable ribonuclease FAU-1 (Pyrobaculum aerophilum (strain ATCC 51768 / DSM 7523 / JCM 9630 / CIP 104966 / NBRC 100827 / IM2)).